Reading from the N-terminus, the 437-residue chain is GTPase Obg (437 aa).

Residues 2–160 (SMFLDTAKIS…RELQLELKIL (159 aa)) form the Obg domain. Residues 127–146 (GNIRFATPRNPAPEIAENGE) form a disordered region. Positions 161–338 (ADVGLVGFPS…LLEATAELLD (178 aa)) constitute an OBG-type G domain. Residues 167 to 174 (GFPSVGKS), 192 to 196 (FTTIV), 214 to 217 (DLPG), 284 to 287 (NKMD), and 319 to 321 (SSL) each bind GTP. Residues S174 and T194 each contribute to the Mg(2+) site. Residues 359-437 (GFNEEERPFE…IGNFEFEFVD (79 aa)) enclose the OCT domain.

Belongs to the TRAFAC class OBG-HflX-like GTPase superfamily. OBG GTPase family. As to quaternary structure, monomer. It depends on Mg(2+) as a cofactor.

The protein localises to the cytoplasm. In terms of biological role, an essential GTPase which binds GTP, GDP and possibly (p)ppGpp with moderate affinity, with high nucleotide exchange rates and a fairly low GTP hydrolysis rate. Plays a role in control of the cell cycle, stress response, ribosome biogenesis and in those bacteria that undergo differentiation, in morphogenesis control. This chain is GTPase Obg, found in Streptococcus thermophilus (strain ATCC BAA-491 / LMD-9).